The sequence spans 371 residues: 3-dehydroquinate synthase (371 aa).

NAD(+) is bound by residues 114-118 (GVVGD), 138-139 (TT), K151, K160, and 178-181 (TLNT). 3 residues coordinate Zn(2+): E193, H258, and H275.

This sequence belongs to the sugar phosphate cyclases superfamily. Dehydroquinate synthase family. It depends on Co(2+) as a cofactor. Zn(2+) serves as cofactor. The cofactor is NAD(+).

The protein localises to the cytoplasm. The enzyme catalyses 7-phospho-2-dehydro-3-deoxy-D-arabino-heptonate = 3-dehydroquinate + phosphate. It functions in the pathway metabolic intermediate biosynthesis; chorismate biosynthesis; chorismate from D-erythrose 4-phosphate and phosphoenolpyruvate: step 2/7. Functionally, catalyzes the conversion of 3-deoxy-D-arabino-heptulosonate 7-phosphate (DAHP) to dehydroquinate (DHQ). The protein is 3-dehydroquinate synthase of Synechococcus sp. (strain CC9605).